Here is a 176-residue protein sequence, read N- to C-terminus: Cathelicidin-2 (176 aa).

An N-terminal signal peptide occupies residues 1 to 29 (METQRASLSLGRCSLWLLLLGLVLPSASA). Pyrrolidone carboxylic acid is present on Gln30. Residues 30–130 (QALSYREAVL…DINCNELQSV (101 aa)) constitute a propeptide that is removed on maturation. 2 disulfides stabilise this stretch: Cys85/Cys96 and Cys107/Cys124. Residues 157-176 (IFPPIRPPFRPPLGPFPGRR) form a disordered region. The residue at position 173 (Pro173) is a Proline amide. A propeptide spans 174-176 (GRR) (removed in mature form).

The protein belongs to the cathelicidin family. Elastase is responsible for its maturation. Large granules of neutrophils.

It is found in the secreted. Exerts, in vitro, a potent antimicrobial activity. Probably due to an impairment of the function of the respiratory chain and of energy-dependent activities in the inner membrane of susceptible microorganisms. The chain is Cathelicidin-2 (CATHL2) from Bos taurus (Bovine).